The sequence spans 364 residues: MKLIKLKLASFRNLQNIELAPGKKFNVFYGNNGQGKTNLLESIYLLATMKSFKQARNAELIAFAGEFALVKGTVERDQVRREIAVLIEKQGKKAKVDAKLMTRLDDFFGNLNVVLFTPEEISMVRGGPDLRRRYLDRAVFTCDLGYLTAYHDYAKILKNRNALLKVNETTGIEVWTEQLVQAALLVIERRKAYLDRIGKLLQGFYSEISGNDETVQIEYRLHGVDERLLAEDPAGALNQALRAHAAEERRRGTTAIGPHRDDLYFGLNGRSARQFASQGQQRSFVLALKMAEIEHITRCFEAPPVLLLDDMTSELDRERNRNLMEFLKKREMQVFITTTSLHNVDIDELQDNRTFRIKEGKILD.

30-37 contacts ATP; the sequence is GNNGQGKT.

The protein belongs to the RecF family.

The protein localises to the cytoplasm. The RecF protein is involved in DNA metabolism; it is required for DNA replication and normal SOS inducibility. RecF binds preferentially to single-stranded, linear DNA. It also seems to bind ATP. The protein is DNA replication and repair protein RecF of Citrifermentans bemidjiense (strain ATCC BAA-1014 / DSM 16622 / JCM 12645 / Bem) (Geobacter bemidjiensis).